A 228-amino-acid chain; its full sequence is Enolase-phosphatase E1 (228 aa).

The protein belongs to the HAD-like hydrolase superfamily. MasA/MtnC family. In terms of assembly, monomer. Mg(2+) serves as cofactor.

The enzyme catalyses 5-methylsulfanyl-2,3-dioxopentyl phosphate + H2O = 1,2-dihydroxy-5-(methylsulfanyl)pent-1-en-3-one + phosphate. It participates in amino-acid biosynthesis; L-methionine biosynthesis via salvage pathway; L-methionine from S-methyl-5-thio-alpha-D-ribose 1-phosphate: step 3/6. The protein operates within amino-acid biosynthesis; L-methionine biosynthesis via salvage pathway; L-methionine from S-methyl-5-thio-alpha-D-ribose 1-phosphate: step 4/6. Bifunctional enzyme that catalyzes the enolization of 2,3-diketo-5-methylthiopentyl-1-phosphate (DK-MTP-1-P) into the intermediate 2-hydroxy-3-keto-5-methylthiopentenyl-1-phosphate (HK-MTPenyl-1-P), which is then dephosphorylated to form the acireductone 1,2-dihydroxy-3-keto-5-methylthiopentene (DHK-MTPene). The polypeptide is Enolase-phosphatase E1 (Picosynechococcus sp. (strain ATCC 27264 / PCC 7002 / PR-6) (Agmenellum quadruplicatum)).